Consider the following 136-residue polypeptide: Large ribosomal subunit protein eL27 (136 aa).

It belongs to the eukaryotic ribosomal protein eL27 family.

This chain is Large ribosomal subunit protein eL27 (RPL27), found in Candida albicans (Yeast).